The sequence spans 344 residues: Ig alpha chain C region (344 aa).

The 94-residue stretch at 6 to 99 (PTIYPLTLPP…SNPVQELDVN (94 aa)) folds into the Ig-like 1 domain. Disulfide bonds link Cys26–Cys84 and Cys76–Cys100. N-linked (GlcNAc...) asparagine glycosylation is found at Asn38 and Asn99. O-linked (GalNAc) serine; in variant MOPC 47A glycosylation is present at Ser101. 2 disulfide bridges follow: Cys114-Cys171 and Cys138-Cys195. Ig-like domains lie at 116-206 (PSLS…GTLT) and 219-321 (PQVH…KTID). The N-linked (GlcNAc...) asparagine glycan is linked to Asn329. N-linked (GlcNAc...) asparagine; in variant M511 glycosylation is present at Ser331.

Ig alpha is the major immunoglobulin class in body secretions. It may serve both to defend against local infection and to prevent access of foreign antigens to the general immunologic system. This is Ig alpha chain C region from Mus musculus (Mouse).